We begin with the raw amino-acid sequence, 317 residues long: Apolipoprotein E (317 aa).

Positions 1 to 18 (MKVLWAALLVTFLAGCQA) are cleaved as a signal peptide. 8 repeat units span residues 80 to 101 (TLMDETMKELKAYKSDLEEQLS), 102 to 123 (PVAEETRARLSKELQAAQARLG), 124 to 145 (ADMEDVRSRLVQYRGEVQAMLG), 146 to 167 (QSTEELRARLASHLRKLRKRLL), 168 to 189 (RDADDLQKRLAVYQAGAREGAE), 190 to 211 (RGVSAIRERLGPLVEQGRVRAA), 212 to 233 (TVGSLAGQPLQERAQAWGERLR), and 234 to 255 (ARMEEVGSRTRDRLDEVKEQVA). The tract at residues 80–255 (TLMDETMKEL…RLDEVKEQVA (176 aa)) is 8 X 22 AA approximate tandem repeats. Residue methionine 143 is modified to Methionine sulfoxide. Serine 147 carries the phosphoserine modification. The interval 158–168 (HLRKLRKRLLR) is LDL and other lipoprotein receptors binding. 162–165 (LRKR) contacts heparin. A lipid-binding and lipoprotein association region spans residues 210–290 (AATVGSLAGQ…SWFEPLVEDM (81 aa)). Residue 229 to 236 (GERLRARM) coordinates heparin. Residues 266 to 317 (QQISLQAEAFQARLKSWFEPLVEDMQRQWAGLVEKVQAAVGASTAPVPSDNH) form a homooligomerization region. Positions 278 to 290 (RLKSWFEPLVEDM) are specificity for association with VLDL.

The protein belongs to the apolipoprotein A1/A4/E family. As to quaternary structure, homotetramer. May interact with ABCA1; functionally associated with ABCA1 in the biogenesis of HDLs. May interact with APP/A4 amyloid-beta peptide; the interaction is extremely stable in vitro but its physiological significance is unclear. May interact with MAPT. May interact with MAP2. In the cerebrospinal fluid, interacts with secreted SORL1. Interacts with PMEL; this allows the loading of PMEL luminal fragment on ILVs to induce fibril nucleation. Post-translationally, APOE exists as multiple glycosylated and sialylated glycoforms within cells and in plasma. The extent of glycosylation and sialylation are tissue and context specific. Glycated in plasma VLDL. In terms of processing, phosphorylated by FAM20C in the extracellular medium.

The protein localises to the secreted. It localises to the extracellular space. Its subcellular location is the extracellular matrix. The protein resides in the extracellular vesicle. It is found in the endosome. The protein localises to the multivesicular body. Its function is as follows. APOE is an apolipoprotein, a protein associating with lipid particles, that mainly functions in lipoprotein-mediated lipid transport between organs via the plasma and interstitial fluids. APOE is a core component of plasma lipoproteins and is involved in their production, conversion and clearance. Apolipoproteins are amphipathic molecules that interact both with lipids of the lipoprotein particle core and the aqueous environment of the plasma. As such, APOE associates with chylomicrons, chylomicron remnants, very low density lipoproteins (VLDL) and intermediate density lipoproteins (IDL) but shows a preferential binding to high-density lipoproteins (HDL). It also binds a wide range of cellular receptors including the LDL receptor/LDLR, the LDL receptor-related proteins LRP1, LRP2 and LRP8 and the very low-density lipoprotein receptor/VLDLR that mediate the cellular uptake of the APOE-containing lipoprotein particles. Finally, APOE also has a heparin-binding activity and binds heparan-sulfate proteoglycans on the surface of cells, a property that supports the capture and the receptor-mediated uptake of APOE-containing lipoproteins by cells. A main function of APOE is to mediate lipoprotein clearance through the uptake of chylomicrons, VLDLs, and HDLs by hepatocytes. APOE is also involved in the biosynthesis by the liver of VLDLs as well as their uptake by peripheral tissues ensuring the delivery of triglycerides and energy storage in muscle, heart and adipose tissues. By participating in the lipoprotein-mediated distribution of lipids among tissues, APOE plays a critical role in plasma and tissues lipid homeostasis. APOE is also involved in two steps of reverse cholesterol transport, the HDLs-mediated transport of cholesterol from peripheral tissues to the liver, and thereby plays an important role in cholesterol homeostasis. First, it is functionally associated with ABCA1 in the biogenesis of HDLs in tissues. Second, it is enriched in circulating HDLs and mediates their uptake by hepatocytes. APOE also plays an important role in lipid transport in the central nervous system, regulating neuron survival and sprouting. In Colobus guereza (Mantled guereza), this protein is Apolipoprotein E (APOE).